Reading from the N-terminus, the 140-residue chain is Phosphoribosyl-AMP cyclohydrolase (140 aa).

Residue Asp-78 participates in Mg(2+) binding. Cys-79 lines the Zn(2+) pocket. 2 residues coordinate Mg(2+): Asp-80 and Asp-82. Positions 96 and 103 each coordinate Zn(2+).

It belongs to the PRA-CH family. In terms of assembly, homodimer. Requires Mg(2+) as cofactor. The cofactor is Zn(2+).

It localises to the cytoplasm. The enzyme catalyses 1-(5-phospho-beta-D-ribosyl)-5'-AMP + H2O = 1-(5-phospho-beta-D-ribosyl)-5-[(5-phospho-beta-D-ribosylamino)methylideneamino]imidazole-4-carboxamide. The protein operates within amino-acid biosynthesis; L-histidine biosynthesis; L-histidine from 5-phospho-alpha-D-ribose 1-diphosphate: step 3/9. Its function is as follows. Catalyzes the hydrolysis of the adenine ring of phosphoribosyl-AMP. The sequence is that of Phosphoribosyl-AMP cyclohydrolase from Ralstonia pickettii (strain 12J).